Here is a 238-residue protein sequence, read N- to C-terminus: Ribonuclease 3 (238 aa).

The RNase III domain maps to 11–136; the sequence is RARLEAAIGY…LIAAIYLDGG (126 aa). E49 contributes to the Mg(2+) binding site. Residue D53 is part of the active site. 2 residues coordinate Mg(2+): D122 and E125. The active site involves E125. Residues 161–230 form the DRBM domain; the sequence is DAKTELQEWA…AMKLLEREGV (70 aa).

It belongs to the ribonuclease III family. In terms of assembly, homodimer. Mg(2+) is required as a cofactor.

It localises to the cytoplasm. The enzyme catalyses Endonucleolytic cleavage to 5'-phosphomonoester.. Functionally, digests double-stranded RNA. Involved in the processing of primary rRNA transcript to yield the immediate precursors to the large and small rRNAs (23S and 16S). Processes some mRNAs, and tRNAs when they are encoded in the rRNA operon. Processes pre-crRNA and tracrRNA of type II CRISPR loci if present in the organism. This is Ribonuclease 3 from Rhizobium meliloti (strain 1021) (Ensifer meliloti).